Consider the following 236-residue polypeptide: Leucyl/phenylalanyl-tRNA--protein transferase (236 aa).

The protein belongs to the L/F-transferase family.

The protein localises to the cytoplasm. The catalysed reaction is N-terminal L-lysyl-[protein] + L-leucyl-tRNA(Leu) = N-terminal L-leucyl-L-lysyl-[protein] + tRNA(Leu) + H(+). It catalyses the reaction N-terminal L-arginyl-[protein] + L-leucyl-tRNA(Leu) = N-terminal L-leucyl-L-arginyl-[protein] + tRNA(Leu) + H(+). The enzyme catalyses L-phenylalanyl-tRNA(Phe) + an N-terminal L-alpha-aminoacyl-[protein] = an N-terminal L-phenylalanyl-L-alpha-aminoacyl-[protein] + tRNA(Phe). In terms of biological role, functions in the N-end rule pathway of protein degradation where it conjugates Leu, Phe and, less efficiently, Met from aminoacyl-tRNAs to the N-termini of proteins containing an N-terminal arginine or lysine. This chain is Leucyl/phenylalanyl-tRNA--protein transferase, found in Shewanella loihica (strain ATCC BAA-1088 / PV-4).